The sequence spans 950 residues: Valine--tRNA ligase (950 aa).

Residues 40-50 (PNVTGSLHMGH) carry the 'HIGH' region motif. Positions 551 to 555 (KMSKS) match the 'KMSKS' region motif. ATP is bound at residue K554. A coiled-coil region spans residues 881-950 (LIDKSAELGR…AEQRQKIAAL (70 aa)).

The protein belongs to the class-I aminoacyl-tRNA synthetase family. ValS type 1 subfamily. As to quaternary structure, monomer.

It localises to the cytoplasm. It carries out the reaction tRNA(Val) + L-valine + ATP = L-valyl-tRNA(Val) + AMP + diphosphate. Its function is as follows. Catalyzes the attachment of valine to tRNA(Val). As ValRS can inadvertently accommodate and process structurally similar amino acids such as threonine, to avoid such errors, it has a 'posttransfer' editing activity that hydrolyzes mischarged Thr-tRNA(Val) in a tRNA-dependent manner. This Pseudomonas aeruginosa (strain ATCC 15692 / DSM 22644 / CIP 104116 / JCM 14847 / LMG 12228 / 1C / PRS 101 / PAO1) protein is Valine--tRNA ligase.